The sequence spans 318 residues: DNA repair nuclease/redox regulator APEX1 (318 aa).

The tract at residues 1 to 33 (MPKRGKKGAVAEDGDELKTEPEAKKSKTAAKKN) is necessary for interaction with YBX1, binding to RNA, association together with NPM1 to rRNA, endoribonuclease activity on abasic RNA and localization in the nucleoli. Residues 1–60 (MPKRGKKGAVAEDGDELKTEPEAKKSKTAAKKNDKEAAGEGPALYEDPPDQKTSPSGKPA) are disordered. N6-acetyllysine; by EP300 occurs at positions 6 and 7. The short motif at 8–13 (GAVAED) is the Nuclear localization signal (NLS) element. Positions 16–38 (ELKTEPEAKKSKTAAKKNDKEAA) are enriched in basic and acidic residues. Positions 23–33 (AKKSKTAAKKN) are necessary for interaction with NPM1 and for efficient rRNA binding. K27, K31, K32, and K35 each carry N6-acetyllysine. S54 is subject to Phosphoserine. Residues 64-80 (ICSWNVDGLRAWIKKKG) carry the Nuclear export signal (NES) motif. Position 65 is an S-nitrosocysteine; alternate (C65). Cysteines 65 and 93 form a disulfide. Position 70 (D70) interacts with Mg(2+). An S-nitrosocysteine; alternate modification is found at C93. E96 is a Mg(2+) binding site. Y171 is an active-site residue. Position 197 is an N6-acetyllysine (K197). Mg(2+) is bound by residues D210 and N212. D210 (proton donor/acceptor) is an active-site residue. The residue at position 233 (T233) is a Phosphothreonine; by CDK5. Positions 289–318 (HSLLPALCDSKIRSKALGSDHCPITLYLAL) are mitochondrial targeting sequence (MTS). Residue D308 participates in Mg(2+) binding. Residue C310 is modified to S-nitrosocysteine.

It belongs to the DNA repair enzymes AP/ExoA family. Monomer. Homodimer; disulfide-linked. Component of the SET complex, composed of at least APEX1, SET, ANP32A, HMGB2, NME1 and TREX1. Associates with the dimer XRCC5/XRCC6 in a DNA-dependent manner. Interacts with SIRT1; the interaction is increased in the context of genotoxic stress. Interacts with HDAC1, HDAC2 and HDAC3; the interactions are not dependent on the APEX1 acetylation status. Interacts with XRCC1; the interaction is induced by SIRT1 and increased with the APEX1 acetylated form. Interacts with NPM1 (via N-terminal domain); the interaction is RNA-dependent and decreases in hydrogen peroxide-damaged cells. Interacts (via N-terminus) with YBX1 (via C-terminus); the interaction is increased in presence of APEX1 acetylated at Lys-6 and Lys-7. Interacts with HNRNPL; the interaction is DNA-dependent. Interacts (via N-terminus) with KPNA1 and KPNA2. Interacts with TXN; the interaction stimulates the FOS/JUN AP-1 complex DNA-binding activity in a redox-dependent manner. Interacts with GZMA, KRT8, MDM2, POLB, PRDX6, PRPF19, RPLP0, TOMM20 and WDR77. Binds to CDK5. It depends on Mg(2+) as a cofactor. Mn(2+) is required as a cofactor. Phosphorylated. Phosphorylation by kinase PKC or casein kinase CK2 results in enhanced redox activity that stimulates binding of the FOS/JUN AP-1 complex to its cognate binding site. AP-endodeoxyribonuclease activity is not affected by CK2-mediated phosphorylation. Phosphorylation of Thr-233 by CDK5 in response to MPP(+)/MPTP (1-methyl-4-phenylpyridinium) reduces AP-endodeoxyribonuclease activity resulting in accumulation of DNA damage and contributing to neuronal death. In terms of processing, acetylated on Lys-6 and Lys-7. Acetylation is increased by the transcriptional coactivator EP300 acetyltransferase, genotoxic agents like H(2)O(2) and methyl methanesulfonate (MMS). Acetylation increases its binding affinity to the negative calcium response element (nCaRE) DNA promoter. The acetylated form induces a stronger binding of YBX1 to the Y-box sequence in the MDR1 promoter than the unacetylated form. Deacetylated on lysines. Lys-6 and Lys-7 are deacetylated by SIRT1. Post-translationally, cleaved at Lys-31 by granzyme A to create the mitochondrial form; leading in reduction of binding to DNA, AP endodeoxyribonuclease activity, redox activation of transcription factors and to enhanced cell death. Cleaved by granzyme K; leading to intracellular ROS accumulation and enhanced cell death after oxidative stress. Cys-69 and Cys-93 are nitrosylated in response to nitric oxide (NO) and lead to the exposure of the nuclear export signal (NES). In terms of processing, ubiquitinated by MDM2; leading to translocation to the cytoplasm and proteasomal degradation.

The protein localises to the nucleus. It is found in the nucleolus. It localises to the nucleus speckle. The protein resides in the endoplasmic reticulum. Its subcellular location is the cytoplasm. The protein localises to the mitochondrion. The catalysed reaction is Exonucleolytic cleavage in the 3'- to 5'-direction to yield nucleoside 5'-phosphates.. With respect to regulation, NPM1 stimulates endodeoxyribonuclease activity on double-stranded DNA with AP sites, but inhibits endoribonuclease activity on single-stranded RNA containing AP sites. Its function is as follows. Multifunctional protein that plays a central role in the cellular response to oxidative stress. The two major activities of APEX1 are DNA repair and redox regulation of transcriptional factors. Functions as an apurinic/apyrimidinic (AP) endodeoxyribonuclease in the DNA base excision repair (BER) pathway of DNA lesions induced by oxidative and alkylating agents. Initiates repair of AP sites in DNA by catalyzing hydrolytic incision of the phosphodiester backbone immediately adjacent to the damage, generating a single-strand break with 5'-deoxyribose phosphate and 3'-hydroxyl ends. Also incises at AP sites in the DNA strand of DNA/RNA hybrids, single-stranded DNA regions of R-loop structures, and single-stranded RNA molecules. Has 3'-5' exoribonuclease activity on mismatched deoxyribonucleotides at the 3' termini of nicked or gapped DNA molecules during short-patch BER. Possesses DNA 3' phosphodiesterase activity capable of removing lesions (such as phosphoglycolate) blocking the 3' side of DNA strand breaks. May also play a role in the epigenetic regulation of gene expression by participating in DNA demethylation. Acts as a loading factor for POLB onto non-incised AP sites in DNA and stimulates the 5'-terminal deoxyribose 5'-phosphate (dRp) excision activity of POLB. Plays a role in the protection from granzyme-mediated cellular repair leading to cell death. Also involved in the DNA cleavage step of class switch recombination (CSR). On the other hand, APEX1 also exerts reversible nuclear redox activity to regulate DNA binding affinity and transcriptional activity of transcriptional factors by controlling the redox status of their DNA-binding domain, such as the FOS/JUN AP-1 complex after exposure to IR. Involved in calcium-dependent down-regulation of parathyroid hormone (PTH) expression by binding to negative calcium response elements (nCaREs). Together with HNRNPL or the dimer XRCC5/XRCC6, associates with nCaRE, acting as an activator of transcriptional repression. Stimulates the YBX1-mediated MDR1 promoter activity, when acetylated at Lys-6 and Lys-7, leading to drug resistance. Also acts as an endoribonuclease involved in the control of single-stranded RNA metabolism. Plays a role in regulating MYC mRNA turnover by preferentially cleaving in between UA and CA dinucleotides of the MYC coding region determinant (CRD). In association with NMD1, plays a role in the rRNA quality control process during cell cycle progression. Associates, together with YBX1, on the MDR1 promoter. Together with NPM1, associates with rRNA. Binds DNA and RNA. The chain is DNA repair nuclease/redox regulator APEX1 (APEX1) from Gorilla gorilla gorilla (Western lowland gorilla).